The sequence spans 307 residues: Ribonuclease Z (307 aa).

Zn(2+)-binding residues include His64, His66, Asp68, His69, His141, Asp209, and His267. Asp68 acts as the Proton acceptor in catalysis.

It belongs to the RNase Z family. As to quaternary structure, homodimer. The cofactor is Zn(2+).

The enzyme catalyses Endonucleolytic cleavage of RNA, removing extra 3' nucleotides from tRNA precursor, generating 3' termini of tRNAs. A 3'-hydroxy group is left at the tRNA terminus and a 5'-phosphoryl group is left at the trailer molecule.. Zinc phosphodiesterase, which displays some tRNA 3'-processing endonuclease activity. Probably involved in tRNA maturation, by removing a 3'-trailer from precursor tRNA. In Thermoplasma acidophilum (strain ATCC 25905 / DSM 1728 / JCM 9062 / NBRC 15155 / AMRC-C165), this protein is Ribonuclease Z.